Consider the following 445-residue polypeptide: 3-phosphoshikimate 1-carboxyvinyltransferase (445 aa).

The 3-phosphoshikimate site is built by Lys25, Ser26, and Arg30. Residue Lys25 participates in phosphoenolpyruvate binding. Phosphoenolpyruvate-binding residues include Gly98 and Arg126. Ser171, Gln173, Asp324, and Lys351 together coordinate 3-phosphoshikimate. Position 173 (Gln173) interacts with phosphoenolpyruvate. The active-site Proton acceptor is Asp324. Phosphoenolpyruvate-binding residues include Arg355 and Arg398.

Belongs to the EPSP synthase family. In terms of assembly, monomer.

The protein localises to the cytoplasm. The catalysed reaction is 3-phosphoshikimate + phosphoenolpyruvate = 5-O-(1-carboxyvinyl)-3-phosphoshikimate + phosphate. Its pathway is metabolic intermediate biosynthesis; chorismate biosynthesis; chorismate from D-erythrose 4-phosphate and phosphoenolpyruvate: step 6/7. In terms of biological role, catalyzes the transfer of the enolpyruvyl moiety of phosphoenolpyruvate (PEP) to the 5-hydroxyl of shikimate-3-phosphate (S3P) to produce enolpyruvyl shikimate-3-phosphate and inorganic phosphate. This is 3-phosphoshikimate 1-carboxyvinyltransferase from Hydrogenovibrio crunogenus (strain DSM 25203 / XCL-2) (Thiomicrospira crunogena).